Reading from the N-terminus, the 701-residue chain is Potassium-transporting ATPase ATP-binding subunit 1 (701 aa).

The segment at M1–K26 is disordered. The next 4 membrane-spanning stretches (helical) occupy residues M57–F77, G90–A110, V241–L261, and I278–I298. The active-site 4-aspartylphosphate intermediate is the D329. ATP is bound by residues D366, E370, F397 to S404, and K416. Residues D539 and D543 each coordinate Mg(2+). The next 3 membrane-spanning stretches (helical) occupy residues F599–A619, A635–L655, and V681–A701.

The protein belongs to the cation transport ATPase (P-type) (TC 3.A.3) family. Type IA subfamily. In terms of assembly, the system is composed of three essential subunits: KdpA, KdpB and KdpC.

Its subcellular location is the cell inner membrane. It catalyses the reaction K(+)(out) + ATP + H2O = K(+)(in) + ADP + phosphate + H(+). In terms of biological role, part of the high-affinity ATP-driven potassium transport (or Kdp) system, which catalyzes the hydrolysis of ATP coupled with the electrogenic transport of potassium into the cytoplasm. This subunit is responsible for energy coupling to the transport system and for the release of the potassium ions to the cytoplasm. The chain is Potassium-transporting ATPase ATP-binding subunit 1 from Nostoc sp. (strain PCC 7120 / SAG 25.82 / UTEX 2576).